Consider the following 481-residue polypeptide: RAC-beta serine/threonine-protein kinase (481 aa).

Met-1 bears the N-acetylmethionine mark. The region spanning 5-108 is the PH domain; sequence SVIKEGWLHK…WIRAIQMVAN (104 aa). Ser-34 carries the post-translational modification Phosphoserine. Cysteines 60 and 77 form a disulfide. At Ser-126 the chain carries Phosphoserine. O-linked (GlcNAc) serine glycans are attached at residues Ser-128 and Ser-131. Residues 152-409 form the Protein kinase domain; sequence FDYLKLLGKG…AKEVMEHRFF (258 aa). Residues 158–166 and Lys-181 each bind ATP; that span reads LGKGTFGKV. Asp-275 (proton acceptor) is an active-site residue. Residues Asn-280 and Asp-293 each coordinate Mn(2+). Residue Thr-306 is glycosylated (O-linked (GlcNAc) threonine). Phosphothreonine; by PDPK1 is present on Thr-309. O-linked (GlcNAc) threonine glycosylation occurs at Thr-313. In terms of domain architecture, AGC-kinase C-terminal spans 410-481; sequence LSINWQDVVQ…QFSYSASIRE (72 aa). Position 447 is a phosphoserine (Ser-447). Thr-451 is subject to Phosphothreonine. Residues Ser-461, Ser-474, and Ser-478 each carry the phosphoserine modification. O-linked (GlcNAc) serine; alternate glycosylation is present at Ser-474.

This sequence belongs to the protein kinase superfamily. AGC Ser/Thr protein kinase family. RAC subfamily. In terms of assembly, interacts with BTBD10. Interacts with KCTD20. Interacts (via PH domain) with MTCP1, TCL1A and TCL1B; this interaction may facilitate AKT2 oligomerization and phosphorylation, hence increasing kinase activity. Interacts with PHB2; this interaction may be important for myogenic differentiation. Interacts (when phosphorylated) with CLIP3; this interaction promotes cell membrane localization. Interacts with WDFY2 (via WD repeats 1-3). Phosphorylation on Thr-309 and Ser-474 is required for full activity. Phosphorylation of the activation loop at Thr-309 by PDPK1/PDK1 is a prerequisite for full activation. Phosphorylated and activated by PDPK1/PDK1 in the presence of phosphatidylinositol 3,4,5-trisphosphate. Phosphorylation by mTORC2 in response to growth factors plays a key role in AKT1 activation: mTORC2 phosphorylates different sites depending on the context, such as Ser-474 or Ser-478, thereby facilitating subsequent phosphorylation of the activation loop by PDPK1/PDK1. In terms of processing, ubiquitinated; undergoes both 'Lys-48'- and 'Lys-63'-linked polyubiquitination. TRAF6-induced 'Lys-63'-linked AKT2 ubiquitination. When fully phosphorylated and translocated into the nucleus, undergoes 'Lys-48'-polyubiquitination catalyzed by TTC3, leading to its degradation by the proteasome. Post-translationally, O-GlcNAcylation at Thr-306 and Thr-313 inhibits activating phosphorylation at Thr-309 via disrupting the interaction between AKT and PDPK1/PDK1. In terms of tissue distribution, expressed in adipocytes and hepatocytes (at protein level). Expressed at low levels in skeletal muscle (at protein level).

The protein localises to the cytoplasm. It localises to the nucleus. It is found in the cell membrane. The protein resides in the early endosome. The enzyme catalyses L-seryl-[protein] + ATP = O-phospho-L-seryl-[protein] + ADP + H(+). It catalyses the reaction L-threonyl-[protein] + ATP = O-phospho-L-threonyl-[protein] + ADP + H(+). With respect to regulation, phosphorylation at Thr-309 (in the kinase domain) and Ser-474 (in the C-terminal regulatory region) is required for full activation. In adipocytes and hepatocytes, the activation is induced by insulin. AKT2 phosphorylation of PKP1 is induced by insulin. In terms of biological role, serine/threonine kinase closely related to AKT1 and AKT3. All 3 enzymes, AKT1, AKT2 and AKT3, are collectively known as AKT kinase. AKT regulates many processes including metabolism, proliferation, cell survival, growth and angiogenesis, through the phosphorylation of a range of downstream substrates. Over 100 substrates have been reported so far, although for most of them, the precise AKT kinase catalyzing the reaction was not specified. AKT regulates glucose uptake by mediating insulin-induced translocation of the SLC2A4/GLUT4 glucose transporter to the cell surface. Phosphorylation of PTPN1 at 'Ser-50' negatively modulates its phosphatase activity preventing dephosphorylation of the insulin receptor and the attenuation of insulin signaling. Phosphorylation of TBC1D4 triggers the binding of this effector to inhibitory 14-3-3 proteins, which is required for insulin-stimulated glucose transport. AKT also regulates the storage of glucose in the form of glycogen by phosphorylating GSK3A at 'Ser-21' and GSK3B at 'Ser-9', resulting in inhibition of its kinase activity. Phosphorylation of GSK3 isoforms by AKT is also thought to be one mechanism by which cell proliferation is driven. AKT also regulates cell survival via the phosphorylation of MAP3K5 (apoptosis signal-related kinase). Phosphorylation of 'Ser-83' decreases MAP3K5 kinase activity stimulated by oxidative stress and thereby prevents apoptosis. AKT mediates insulin-stimulated protein synthesis by phosphorylating TSC2 at 'Ser-939' and 'Thr-1462', thereby activating mTORC1 signaling and leading to both phosphorylation of 4E-BP1 and in activation of RPS6KB1. AKT is involved in the phosphorylation of members of the FOXO factors (Forkhead family of transcription factors), leading to binding of 14-3-3 proteins and cytoplasmic localization. In particular, FOXO1 is phosphorylated at 'Thr-24', 'Ser-256' and 'Ser-319'. FOXO3 and FOXO4 are phosphorylated on equivalent sites. AKT has an important role in the regulation of NF-kappa-B-dependent gene transcription and positively regulates the activity of CREB1 (cyclic AMP (cAMP)-response element binding protein). The phosphorylation of CREB1 induces the binding of accessory proteins that are necessary for the transcription of pro-survival genes such as BCL2 and MCL1. AKT phosphorylates 'Ser-454' on ATP citrate lyase (ACLY), thereby potentially regulating ACLY activity and fatty acid synthesis. Activates the 3B isoform of cyclic nucleotide phosphodiesterase (PDE3B) via phosphorylation of 'Ser-273', resulting in reduced cyclic AMP levels and inhibition of lipolysis. Phosphorylates PIKFYVE on 'Ser-318', which results in increased PI(3)P-5 activity. The Rho GTPase-activating protein DLC1 is another substrate and its phosphorylation is implicated in the regulation cell proliferation and cell growth. AKT plays a role as key modulator of the AKT-mTOR signaling pathway controlling the tempo of the process of newborn neurons integration during adult neurogenesis, including correct neuron positioning, dendritic development and synapse formation. Signals downstream of phosphatidylinositol 3-kinase (PI(3)K) to mediate the effects of various growth factors such as platelet-derived growth factor (PDGF), epidermal growth factor (EGF), insulin and insulin-like growth factor 1 (IGF1). AKT mediates the antiapoptotic effects of IGF1. Essential for the SPATA13-mediated regulation of cell migration and adhesion assembly and disassembly. May be involved in the regulation of the placental development. In response to lysophosphatidic acid stimulation, inhibits the ciliogenesis cascade. In this context, phosphorylates WDR44, hence stabilizing its interaction with Rab11 and preventing the formation of the ciliogenic Rab11-FIP3-RAB3IP complex. Also phosphorylates RAB3IP/Rabin8, thus may affect RAB3IP guanine nucleotide exchange factor (GEF) activity toward Rab8, which is important for cilia growth. Phosphorylates PKP1, facilitating its interaction with YWHAG and translocation to the nucleus, ultimately resulting in a reduction in keratinocyte intercellular adhesion. Phosphorylation of PKP1 increases PKP1 protein stability, translocation to the cytoplasm away from desmosome plaques and PKP1-driven cap-dependent translation. Several AKT2-specific substrates have been identified, including ANKRD2, C2CD5, CLK2 and PITX2. May play a role in myoblast differentiation. In this context, may act through PITX2 phosphorylation. Unphosphorylated PITX2 associates with an ELAVL1/HuR-containing complex, which stabilizes cyclin mRNA and ensuring cell proliferation. Phosphorylation by AKT2 impairs this association, leading to CCND1 mRNA destabilization and progression towards differentiation. Also involved in the negative regulation of myogenesis in response to stress conditions. In this context, acts by phosphorylating ANKRD2. May also be a key regulator of glucose uptake. Regulates insulin-stimulated glucose transport by the increase of glucose transporter GLUT4 translocation from intracellular stores to the plasma membrane. In this context, acts by phosphorylating C2CD5/CDP138 on 'Ser-197' in insulin-stimulated adipocytes. Through the phosphorylation of CLK2 on 'Thr-343', involved in insulin-regulated suppression of hepatic gluconeogenesis. The chain is RAC-beta serine/threonine-protein kinase from Rattus norvegicus (Rat).